Reading from the N-terminus, the 269-residue chain is Histone doublet H2B-H2A (269 aa).

The interval Met1–Lys168 is histone fold. The tract at residues Arg210–Ala249 is disordered. The segment covering Pro224–Lys241 has biased composition (basic residues).

It is found in the host nucleus. The protein resides in the host cytoplasm. It localises to the virion. Its function is as follows. Histone-like protein that is recruited to viral factories during viral replication and participates in viral DNA packaging and virion production probably by forming unstable nucleosome-like particles. May compact the viral DNA. This Melbournevirus (MelV) protein is Histone doublet H2B-H2A.